The sequence spans 200 residues: Probable molybdenum cofactor guanylyltransferase (200 aa).

Residues 9-11 (LAG), K21, D69, and D100 each bind GTP. D100 lines the Mg(2+) pocket.

It belongs to the MobA family. Requires Mg(2+) as cofactor.

The protein resides in the cytoplasm. The enzyme catalyses Mo-molybdopterin + GTP + H(+) = Mo-molybdopterin guanine dinucleotide + diphosphate. In terms of biological role, transfers a GMP moiety from GTP to Mo-molybdopterin (Mo-MPT) cofactor (Moco or molybdenum cofactor) to form Mo-molybdopterin guanine dinucleotide (Mo-MGD) cofactor. This chain is Probable molybdenum cofactor guanylyltransferase, found in Bacillus cereus (strain AH187).